We begin with the raw amino-acid sequence, 234 residues long: Interleukin-34 (234 aa).

The first 20 residues, 1–20 (MPWGLAWLYCLGILLDVALG), serve as a signal peptide directing secretion. Asn-99 carries an N-linked (GlcNAc...) asparagine glycan. The interval 215 to 234 (PRQPPTSLPRSPSSNHGPLP) is disordered. Over residues 222–234 (LPRSPSSNHGPLP) the composition is skewed to polar residues.

Belongs to the IL-34 family. In terms of assembly, homodimer. Interacts with CSF1R.

The protein localises to the secreted. In terms of biological role, cytokine that promotes the proliferation, survival and differentiation of monocytes and macrophages. Promotes the release of pro-inflammatory chemokines, and thereby plays an important role in innate immunity and in inflammatory processes. Plays an important role in the regulation of osteoclast proliferation and differentiation, and in the regulation of bone resorption. Signaling via CSF1R and its downstream effectors stimulates phosphorylation of MAPK1/ERK2 AND MAPK3/ERK1. This Rattus norvegicus (Rat) protein is Interleukin-34 (Il34).